The following is a 342-amino-acid chain: 4-hydroxy-2-oxovalerate aldolase (342 aa).

The 253-residue stretch at 5–257 (ITLHDMTLRD…DTGVDVWKIQ (253 aa)) folds into the Pyruvate carboxyltransferase domain. Residue 13–14 (RD) participates in substrate binding. Asp14 is a Mn(2+) binding site. The active-site Proton acceptor is the His17. The substrate site is built by Ser167 and His196. Residues His196 and His198 each contribute to the Mn(2+) site. Tyr287 is a binding site for substrate.

It belongs to the 4-hydroxy-2-oxovalerate aldolase family.

It catalyses the reaction (S)-4-hydroxy-2-oxopentanoate = acetaldehyde + pyruvate. This Acidovorax sp. (strain JS42) protein is 4-hydroxy-2-oxovalerate aldolase.